Here is a 445-residue protein sequence, read N- to C-terminus: Proline--tRNA ligase (445 aa).

It belongs to the class-II aminoacyl-tRNA synthetase family. ProS type 2 subfamily. As to quaternary structure, homodimer.

It localises to the cytoplasm. It catalyses the reaction tRNA(Pro) + L-proline + ATP = L-prolyl-tRNA(Pro) + AMP + diphosphate. In terms of biological role, catalyzes the attachment of proline to tRNA(Pro) in a two-step reaction: proline is first activated by ATP to form Pro-AMP and then transferred to the acceptor end of tRNA(Pro). The sequence is that of Proline--tRNA ligase from Cereibacter sphaeroides (strain ATCC 17025 / ATH 2.4.3) (Rhodobacter sphaeroides).